The chain runs to 455 residues: Bifunctional protein GlmU (455 aa).

The segment at 1 to 229 (MYNCAILLAA…FEETMGVNSR (229 aa)) is pyrophosphorylase. UDP-N-acetyl-alpha-D-glucosamine is bound by residues 8-11 (LAAG), Lys22, Gln73, and 78-79 (GT). A Mg(2+)-binding site is contributed by Asp103. Residues Gly140, Glu155, Asn170, and Asn227 each contribute to the UDP-N-acetyl-alpha-D-glucosamine site. Asn227 serves as a coordination point for Mg(2+). The interval 230–250 (LQLAEVEAIMRKRINAMHLEN) is linker. Positions 251–455 (GVTIIDPNNT…EDWVKKKDEK (205 aa)) are N-acetyltransferase. Residues Arg332 and Lys350 each contribute to the UDP-N-acetyl-alpha-D-glucosamine site. The Proton acceptor role is filled by His362. Residues Tyr365 and Asn376 each contribute to the UDP-N-acetyl-alpha-D-glucosamine site. Acetyl-CoA contacts are provided by residues 385–386 (NY), Ala422, and Arg439.

The protein in the N-terminal section; belongs to the N-acetylglucosamine-1-phosphate uridyltransferase family. It in the C-terminal section; belongs to the transferase hexapeptide repeat family. In terms of assembly, homotrimer. The cofactor is Mg(2+).

The protein localises to the cytoplasm. The enzyme catalyses alpha-D-glucosamine 1-phosphate + acetyl-CoA = N-acetyl-alpha-D-glucosamine 1-phosphate + CoA + H(+). It catalyses the reaction N-acetyl-alpha-D-glucosamine 1-phosphate + UTP + H(+) = UDP-N-acetyl-alpha-D-glucosamine + diphosphate. The protein operates within nucleotide-sugar biosynthesis; UDP-N-acetyl-alpha-D-glucosamine biosynthesis; N-acetyl-alpha-D-glucosamine 1-phosphate from alpha-D-glucosamine 6-phosphate (route II): step 2/2. It functions in the pathway nucleotide-sugar biosynthesis; UDP-N-acetyl-alpha-D-glucosamine biosynthesis; UDP-N-acetyl-alpha-D-glucosamine from N-acetyl-alpha-D-glucosamine 1-phosphate: step 1/1. It participates in bacterial outer membrane biogenesis; LPS lipid A biosynthesis. Its function is as follows. Catalyzes the last two sequential reactions in the de novo biosynthetic pathway for UDP-N-acetylglucosamine (UDP-GlcNAc). The C-terminal domain catalyzes the transfer of acetyl group from acetyl coenzyme A to glucosamine-1-phosphate (GlcN-1-P) to produce N-acetylglucosamine-1-phosphate (GlcNAc-1-P), which is converted into UDP-GlcNAc by the transfer of uridine 5-monophosphate (from uridine 5-triphosphate), a reaction catalyzed by the N-terminal domain. The sequence is that of Bifunctional protein GlmU from Clostridium tetani (strain Massachusetts / E88).